The primary structure comprises 368 residues: Core histone macro-H2A.1 (368 aa).

Positions 2 to 117 (SSRGGKKKST…NIHPELLAKK (116 aa)) constitute a Histone H2A domain. An N6-lactoyllysine; alternate mark is found at Lys-7 and Lys-9. N6-methyllysine is present on Lys-18. Lys-116 bears the N6-acetyllysine; alternate mark. Residue Lys-116 forms a Glycyl lysine isopeptide (Lys-Gly) (interchain with G-Cter in ubiquitin); alternate linkage. Residue Lys-117 forms a Glycyl lysine isopeptide (Lys-Gly) (interchain with G-Cter in ubiquitin) linkage. An N6-acetyllysine; alternate modification is found at Lys-123. An N6,N6-dimethyllysine; alternate modification is found at Lys-123. Lys-123 is covalently cross-linked (Glycyl lysine isopeptide (Lys-Gly) (interchain with G-Cter in SUMO2); alternate). Residues 128 to 179 (ITPPPAKKAKSPSQKKPVAKKTGGKKGARKSKKQGEVSKAASADSTTEGAPT) form a disordered region. Residue Thr-129 is modified to Phosphothreonine. The segment covering 144-159 (PVAKKTGGKKGARKSK) has biased composition (basic residues). Lys-166 participates in a covalent cross-link: Glycyl lysine isopeptide (Lys-Gly) (interchain with G-Cter in SUMO2). Ser-169 and Ser-172 each carry phosphoserine. The region spanning 183 to 366 (TVLSTKSLFL…IYVQEMAKLD (184 aa)) is the Macro domain. Lys-188 is covalently cross-linked (Glycyl lysine isopeptide (Lys-Gly) (interchain with G-Cter in SUMO2)). A glycoprotein is bound by residues Asp-202, Ile-203, Val-225, Ser-274, Gly-311, Ser-312, Gly-313, and Asn-315. Lys-319 participates in a covalent cross-link: Glycyl lysine isopeptide (Lys-Gly) (interchain with G-Cter in SUMO2).

Belongs to the histone H2A family. As to quaternary structure, the nucleosome is a histone octamer containing two molecules each of H2A, H2B, H3 and H4 assembled in one H3-H4 heterotetramer and two H2A-H2B heterodimers. Interacts with HDAC1 and HDAC2. Interacts with SPOP. Part of a complex consisting of MACROH2A1, CUL3 and SPOP. In terms of assembly, interacts with PARP1. In terms of processing, monoubiquitinated at either Lys-116 or Lys-117. May also be polyubiquitinated. Ubiquitination is mediated by the CUL3/SPOP E3 complex and does not promote proteasomal degradation. Instead, it is required for enrichment in inactive X chromosome chromatin. In terms of tissue distribution, present only in liver and brain (at protein level). Present in brain, thymus, testis, liver and kidney (at protein level).

The protein resides in the nucleus. The protein localises to the chromosome. Variant histone H2A which replaces conventional H2A in a subset of nucleosomes where it represses transcription. Nucleosomes wrap and compact DNA into chromatin, limiting DNA accessibility to the cellular machineries which require DNA as a template. Histones thereby play a central role in transcription regulation, DNA repair, DNA replication and chromosomal stability. DNA accessibility is regulated via a complex set of post-translational modifications of histones, also called histone code, and nucleosome remodeling. Involved in stable X chromosome inactivation. Inhibits the binding of transcription factors, including NF-kappa-B, and interferes with the activity of remodeling SWI/SNF complexes. Inhibits histone acetylation by EP300 and recruits class I HDACs, which induces a hypoacetylated state of chromatin. In terms of biological role, isoform that specifically binds poly-ADP-ribose and O-acetyl-ADP-ribose and plays a key role in NAD(+) metabolism. Able to bind to the ends of poly-ADP-ribose chains created by PARP1 and cap them. This prevents PARP1 from further addition of ADP-ribose and thus limits the consumption of nuclear NAD(+), allowing the cell to maintain proper NAD(+) levels in both the nucleus and the mitochondria to promote proper mitochondrial respiration. Increases the expression of genes involved in redox metabolism, including SOD3. Functionally, in contrast to isoform 1, does not bind poly-ADP-ribose. Represses SOD3 gene expression. This is Core histone macro-H2A.1 from Rattus norvegicus (Rat).